A 145-amino-acid chain; its full sequence is Large ribosomal subunit protein uL11 (145 aa).

This sequence belongs to the universal ribosomal protein uL11 family. As to quaternary structure, part of the ribosomal stalk of the 50S ribosomal subunit. Interacts with L10 and the large rRNA to form the base of the stalk. L10 forms an elongated spine to which L12 dimers bind in a sequential fashion forming a multimeric L10(L12)X complex. One or more lysine residues are methylated.

In terms of biological role, forms part of the ribosomal stalk which helps the ribosome interact with GTP-bound translation factors. The polypeptide is Large ribosomal subunit protein uL11 (Hydrogenobaculum sp. (strain Y04AAS1)).